A 515-amino-acid polypeptide reads, in one-letter code: Centromere protein T (515 aa).

Disordered stretches follow at residues 24–156 (ADSR…KRKQ) and 271–411 (LSGK…DPHK). Residues 29 to 44 (PMRRRSTRINAQRRRS) show a composition bias toward basic residues. Positions 45-58 (QTPYSNRQGSQTKT) are enriched in polar residues. Thr86 is modified (phosphothreonine). Residues 94 to 375 (ILLTAPESST…DSLPAEQPPP (282 aa)) form a flexible stalk domain region. A compositionally biased stretch (polar residues) spans 296–306 (SSGTRLQSRMS). Phosphoserine occurs at positions 313, 333, 345, 346, 357, and 376.

This sequence belongs to the CENP-T/CNN1 family. Component of the CENPA-CAD complex, composed of CENPI, CENPK, CENPL, CENPO, CENPP, CENPQ, CENPR and CENPS. The CENPA-CAD complex is probably recruited on centromeres by the CENPA-NAC complex, at least composed of CENPA, CENPC, CENPH, CENPM, CENPN, CENPT and CENPU. Identified in a centromeric complex containing histones H2A, H2B, H3 and H4, and at least CENPA, CENPB, CENPC, CENPT, CENPN, HJURP, SUPT16H, SSRP1 and RSF1. Interacts (via N-terminus) with the NDC80 complex. Heterodimer with CENPW; this dimer coassembles with CENPS-CENPX heterodimers at centromeres to form the tetrameric CENP-T-W-S-X complex. Dynamically phosphorylated during the cell cycle. Phosphorylated during G2 phase, metaphase and anaphase, but not during telophase or G1 phase.

The protein resides in the nucleus. The protein localises to the chromosome. It localises to the centromere. It is found in the kinetochore. In terms of biological role, component of the CENPA-NAC (nucleosome-associated) complex, a complex that plays a central role in assembly of kinetochore proteins, mitotic progression and chromosome segregation. The CENPA-NAC complex recruits the CENPA-CAD (nucleosome distal) complex and may be involved in incorporation of newly synthesized CENPA into centromeres. Part of a nucleosome-associated complex that binds specifically to histone H3-containing nucleosomes at the centromere, as opposed to nucleosomes containing CENPA. Component of the heterotetrameric CENP-T-W-S-X complex that binds and supercoils DNA, and plays an important role in kinetochore assembly. CENPT has a fundamental role in kinetochore assembly and function. It is one of the inner kinetochore proteins, with most further proteins binding downstream. Required for normal chromosome organization and normal progress through mitosis. The chain is Centromere protein T (Cenpt) from Mus musculus (Mouse).